The chain runs to 142 residues: Transcription antitermination protein NusB (142 aa).

Belongs to the NusB family.

In terms of biological role, involved in transcription antitermination. Required for transcription of ribosomal RNA (rRNA) genes. Binds specifically to the boxA antiterminator sequence of the ribosomal RNA (rrn) operons. The protein is Transcription antitermination protein NusB of Roseiflexus castenholzii (strain DSM 13941 / HLO8).